A 392-amino-acid chain; its full sequence is Alpha-(1,3)-fucosyltransferase fut-6 (392 aa).

Residues methionine 1–arginine 12 lie on the Cytoplasmic side of the membrane. Residues tyrosine 13–valine 35 form a helical; Signal-anchor for type II membrane protein membrane-spanning segment. Over proline 36–leucine 392 the chain is Lumenal. Residue asparagine 158 is glycosylated (N-linked (GlcNAc...) asparagine).

It belongs to the glycosyltransferase 10 family. It depends on Unlike other alpha-(1,3)-fucosyltransferases, appears not to require a divalent metal cation as cofactor. as a cofactor.

The protein resides in the golgi apparatus. Its subcellular location is the golgi stack membrane. It participates in protein modification; protein glycosylation. Its activity is regulated as follows. Inhibited by divalent metal cations. Its function is as follows. Involved in the fucosylation of N-glycans. Preferentially catalyzes the addition of fucose in alpha 1-3 linkage to the distal GlcNAc residue in N-glycans. Catalyzes the transfer of fucose to Gal-beta-1-4-GlcNAc-alpha-pNP (LN-pNP) and Gal-beta-1-4-GlcNAc-beta-1-3-Gal-beta-1-4-Glc (LNnT). Unlike alpha-(1,3)-fucosyltransferase fut-1, does not transfer fucose to Man-alpha-1-3-(Man-alpha-1-6)-Man-beta-1-4-GlcNAc-beta-1-4-GlcNAc-beta-1-Asn (M3), Man-alpha-1-3-(Man-alpha-1-6)-Man-beta-1-4-GlcNAc-beta-1-4-(Fuc-alpha-1-6)-GlcNAc-beta-1-Asn (M3F6) and GlcNAc-beta-1-2-Man-alpha-1-3-(GlcNAc-beta-1-2-Man-alpha-1-6)-Man-beta-1-4-GlcNAc-beta-1-4(Fuc-alpha-1-6)-GlcNAc-beta-1-Asn (GnM3F6). The protein is Alpha-(1,3)-fucosyltransferase fut-6 of Caenorhabditis elegans.